Reading from the N-terminus, the 451-residue chain is UPF0210 protein CLH_1879 (451 aa).

It belongs to the UPF0210 family. In terms of assembly, homodimer.

The protein is UPF0210 protein CLH_1879 of Clostridium botulinum (strain Alaska E43 / Type E3).